The primary structure comprises 268 residues: Glucosamine-6-phosphate deaminase (268 aa).

Asp72 serves as the catalytic Proton acceptor; for enolization step. Asp141 (for ring-opening step) is an active-site residue. The Proton acceptor; for ring-opening step role is filled by His143. Glu148 (for ring-opening step) is an active-site residue.

It belongs to the glucosamine/galactosamine-6-phosphate isomerase family. NagB subfamily. Homohexamer.

The enzyme catalyses alpha-D-glucosamine 6-phosphate + H2O = beta-D-fructose 6-phosphate + NH4(+). The protein operates within amino-sugar metabolism; N-acetylneuraminate degradation; D-fructose 6-phosphate from N-acetylneuraminate: step 5/5. Its activity is regulated as follows. Allosterically activated by N-acetylglucosamine 6-phosphate (GlcNAc6P). Catalyzes the reversible isomerization-deamination of glucosamine 6-phosphate (GlcN6P) to form fructose 6-phosphate (Fru6P) and ammonium ion. This is Glucosamine-6-phosphate deaminase from Histophilus somni (strain 2336) (Haemophilus somnus).